The chain runs to 268 residues: Nickel import ATP-binding protein NikE (268 aa).

One can recognise an ABC transporter domain in the interval Leu4 to Asn252. Residue Gly45–Ser52 participates in ATP binding.

Belongs to the ABC transporter superfamily. Nickel importer (TC 3.A.1.5.3) family. The complex is composed of two ATP-binding proteins (NikD and NikE), two transmembrane proteins (NikB and NikC) and a solute-binding protein (NikA).

It localises to the cell inner membrane. The catalysed reaction is Ni(2+)(out) + ATP + H2O = Ni(2+)(in) + ADP + phosphate + H(+). Part of the ABC transporter complex NikABCDE involved in nickel import. Responsible for energy coupling to the transport system. The chain is Nickel import ATP-binding protein NikE from Shigella boydii serotype 4 (strain Sb227).